The following is a 206-amino-acid chain: Emopamil-binding protein-like (206 aa).

4 consecutive transmembrane segments (helical) span residues 10 to 30 (EAGG…ALGL), 42 to 62 (GALI…GPFV), 101 to 121 (VEIL…YAIV), and 165 to 185 (CWLY…LLLW). The EXPERA domain occupies 39–184 (ADRGALIWLC…VWVLIPGLLL (146 aa)).

It belongs to the EBP family. In terms of assembly, homodimer. As to expression, widely expressed with highest levels in liver, lung and kidney.

It localises to the endoplasmic reticulum membrane. Its function is as follows. Does not possess sterol isomerase activity and does not bind sigma ligands. This Homo sapiens (Human) protein is Emopamil-binding protein-like (EBPL).